A 505-amino-acid polypeptide reads, in one-letter code: Protein ERGIC-53-like (505 aa).

A signal peptide spans 1 to 25; that stretch reads MLEIRGLSPSLCLLSLLLVLHGAER. Over 26-438 the chain is Lumenal; it reads SQPPPRRRFE…SGWLLGSSTC (413 aa). An L-type lectin-like domain is found at 32–254; sequence RRFEYKLSFK…DVLSFLTFSL (223 aa). An N-linked (GlcNAc...) asparagine glycan is attached at N84. An intrachain disulfide couples C177 to C216. A helical membrane pass occupies residues 439–459; it reads LHTSIFLFFLLLQTVGFFCYV. Topologically, residues 460 to 505 are cytoplasmic; sequence NFSRQELDKRLQEYLSTGSLSLEPALPITRTIGVLRRQPISPSMQA.

The protein resides in the endoplasmic reticulum-Golgi intermediate compartment membrane. This Mus musculus (Mouse) protein is Protein ERGIC-53-like (Lman1l).